The following is a 140-amino-acid chain: Small ribosomal subunit protein bS6 (140 aa).

The segment at 111 to 140 (EHFTGPAGAEGSDDESTESTDEAVAETADA) is disordered. The span at 121 to 140 (GSDDESTESTDEAVAETADA) shows a compositional bias: acidic residues.

The protein belongs to the bacterial ribosomal protein bS6 family.

Its function is as follows. Binds together with bS18 to 16S ribosomal RNA. The polypeptide is Small ribosomal subunit protein bS6 (Rhodopirellula baltica (strain DSM 10527 / NCIMB 13988 / SH1)).